The sequence spans 679 residues: Pollen receptor-like kinase 4 (679 aa).

Positions 1–39 are cleaved as a signal peptide; sequence MLTWETPVMLASNTASTKKLAFITTFLIIVLCPVTMVMS. 5 LRR repeats span residues 118 to 141, 142 to 165, 167 to 191, 193 to 217, and 234 to 257; these read IKNL…VKNF, GALK…AFDG, HHLK…AYLP, LLEL…DLKL, and SNMD…PCSS. Positions 252–269 are enriched in low complexity; that stretch reads LSPCSSDSGSSPDLPSSP. Positions 252–271 are disordered; the sequence is LSPCSSDSGSSPDLPSSPTE. Residues 278–298 traverse the membrane as a helical segment; sequence FFIIAIVLIVIGIILMIISLV. Positions 311-344 are disordered; sequence SAYPSAGQDRTEKYNYDQSTDKDKAADSVTSYTS. Positions 319 to 336 are enriched in basic and acidic residues; sequence DRTEKYNYDQSTDKDKAA. Residues 372-646 enclose the Protein kinase domain; the sequence is RASAEVLGSG…RDAVEKIERL (275 aa). Ser-374 bears the Phosphoserine mark. Residues 378–386 and Lys-400 each bind ATP; that span reads LGSGSFGSS. Phosphoserine occurs at positions 452 and 455. Thr-472 is subject to Phosphothreonine. A Phosphotyrosine modification is found at Tyr-542.

This sequence belongs to the protein kinase superfamily. Ser/Thr protein kinase family. In terms of assembly, interacts in vitro with ROPGEF1 (via PRONE domain). Interacts weakly with the GRI peptide. In terms of tissue distribution, expressed in pollen and/or in flowers, but not in leaves.

The protein localises to the membrane. It catalyses the reaction L-seryl-[protein] + ATP = O-phospho-L-seryl-[protein] + ADP + H(+). It carries out the reaction L-threonyl-[protein] + ATP = O-phospho-L-threonyl-[protein] + ADP + H(+). Receptor-like kinase involved in the control of pollen germination and pollen tube polar growth. Can phosphorylate ROPGEF1 in vitro. This chain is Pollen receptor-like kinase 4, found in Arabidopsis thaliana (Mouse-ear cress).